Consider the following 420-residue polypeptide: ATP phosphoribosyltransferase regulatory subunit (420 aa).

This sequence belongs to the class-II aminoacyl-tRNA synthetase family. HisZ subfamily. As to quaternary structure, heteromultimer composed of HisG and HisZ subunits.

It is found in the cytoplasm. It functions in the pathway amino-acid biosynthesis; L-histidine biosynthesis; L-histidine from 5-phospho-alpha-D-ribose 1-diphosphate: step 1/9. In terms of biological role, required for the first step of histidine biosynthesis. May allow the feedback regulation of ATP phosphoribosyltransferase activity by histidine. In Synechococcus sp. (strain ATCC 27144 / PCC 6301 / SAUG 1402/1) (Anacystis nidulans), this protein is ATP phosphoribosyltransferase regulatory subunit.